Consider the following 846-residue polypeptide: Integrin beta-PS (846 aa).

The N-terminal stretch at 1–28 (MILERNRRCQLALLMIAILAAIAGQTDA) is a signal peptide. The Extracellular portion of the chain corresponds to 29 to 777 (QKAAKLTAVS…NKECPAKVFM (749 aa)). A disulfide bridge connects residues Cys-46 and Cys-55. Asn-72 carries N-linked (GlcNAc...) asparagine glycosylation. One can recognise a VWFA domain in the interval 186-419 (DLYYLMDLSK…ELVKEEYRKI (234 aa)). An intrachain disulfide couples Cys-249 to Cys-252. N-linked (GlcNAc...) asparagine glycosylation is found at Asn-266 and Asn-277. Cys-300 and Cys-341 are disulfide-bonded. N-linked (GlcNAc...) asparagine glycosylation is found at Asn-403 and Asn-428. Disulfide bonds link Cys-441–Cys-453, Cys-473–Cys-741, Cys-507–Cys-530, Cys-522–Cys-533, Cys-535–Cys-544, Cys-546–Cys-579, Cys-561–Cys-577, Cys-571–Cys-582, Cys-584–Cys-599, Cys-601–Cys-624, Cys-606–Cys-622, Cys-614–Cys-627, Cys-629–Cys-638, Cys-640–Cys-664, Cys-647–Cys-662, Cys-656–Cys-667, Cys-669–Cys-682, Cys-685–Cys-688, Cys-692–Cys-701, Cys-698–Cys-771, and Cys-719–Cys-749. 4 I-EGF domains span residues 507–545 (CENP…NKCE), 546–600 (CSAT…KHCE), 601–639 (CDNF…SNCG), and 640–683 (CQES…RHCE). Asn-557 carries N-linked (GlcNAc...) asparagine glycosylation. An N-linked (GlcNAc...) asparagine glycan is attached at Asn-603. Asn-644 carries N-linked (GlcNAc...) asparagine glycosylation. Asn-718 is a glycosylation site (N-linked (GlcNAc...) asparagine). The chain crosses the membrane as a helical span at residues 778–798 (LGIVMGVIAAIVLVGLAILLL). Residues 799–846 (WKLLTTIHDRREFARFEKERMNAKWDTGENPIYKQATSTFKNPMYAGK) are Cytoplasmic-facing. A phosphotyrosine mark is found at Tyr-831 and Tyr-843.

Belongs to the integrin beta chain family. In terms of assembly, heterodimer of an alpha and a beta subunit. Beta-PS associates with either alpha-PS1, alpha-PS2, alpha-PS3, alpha-PS4 or alpha-PS5. In ovaries, strongly expressed in follicle cells. In oocytes, expressed in the forming dorsal appendages (at protein level). Expressed in the embryonic dorsal cuticle, the larval eye and the wing imaginal disk. In testes, detected at the interface between somatic hub cells and cyst stem cells.

It localises to the cell membrane. The protein localises to the apical cell membrane. Its subcellular location is the lateral cell membrane. It is found in the basal cell membrane. Functionally, integrin alpha-PS1/beta-PS is a receptor for laminin. Integrin alpha-PS2/beta-PS is a receptor for Tig, wb and Ten-m. Contributes to endodermal integrity and adhesion between the midgut epithelium and the surrounding visceral muscle. Essential for migration of the primordial midgut cells and for maintaining, but not establishing, cell polarity in the midgut epithelium. The two beta subunits mediate midgut migration by distinct mechanisms: beta-PS requires rhea/talin and Itgbn does not. Required for rhea/talin correct cellular localization in the midgut. Required for many embryonic (dorsal closure and somatic muscle attachments) and postembryonic developmental processes (attachment between cell layers of imaginal disks, organization of ommatidial arrays and flight muscle development). Involved in the function and/or development of the olfactory system. In the testes, essential for shv-dependent maintenance of somatic hub cells and their localization to the apical tip. Plays a role in timely border cell migration during oogenesis. This chain is Integrin beta-PS (mys), found in Drosophila melanogaster (Fruit fly).